The sequence spans 49 residues: Large ribosomal subunit protein eL40 (49 aa).

It belongs to the eukaryotic ribosomal protein eL40 family.

The chain is Large ribosomal subunit protein eL40 from Methanosarcina barkeri (strain Fusaro / DSM 804).